The following is a 106-amino-acid chain: Flagellar transcriptional regulator FlhD (106 aa).

Belongs to the FlhD family. Homodimer; disulfide-linked. Forms a heterohexamer composed of two FlhC and four FlhD subunits. Each FlhC binds a FlhD dimer, forming a heterotrimer, and a hexamer assembles by dimerization of two heterotrimers.

Its subcellular location is the cytoplasm. Its function is as follows. Functions in complex with FlhC as a master transcriptional regulator that regulates transcription of several flagellar and non-flagellar operons by binding to their promoter region. Activates expression of class 2 flagellar genes, including fliA, which is a flagellum-specific sigma factor that turns on the class 3 genes. Also regulates genes whose products function in a variety of physiological pathways. The protein is Flagellar transcriptional regulator FlhD of Burkholderia mallei (strain SAVP1).